Reading from the N-terminus, the 184-residue chain is Protein GrpE (184 aa).

Acidic residues predominate over residues 1–10 (MTDTPPENEE). The segment at 1-22 (MTDTPPENEEQHESNVQNENEV) is disordered.

This sequence belongs to the GrpE family. In terms of assembly, homodimer.

The protein localises to the cytoplasm. Its function is as follows. Participates actively in the response to hyperosmotic and heat shock by preventing the aggregation of stress-denatured proteins, in association with DnaK and GrpE. It is the nucleotide exchange factor for DnaK and may function as a thermosensor. Unfolded proteins bind initially to DnaJ; upon interaction with the DnaJ-bound protein, DnaK hydrolyzes its bound ATP, resulting in the formation of a stable complex. GrpE releases ADP from DnaK; ATP binding to DnaK triggers the release of the substrate protein, thus completing the reaction cycle. Several rounds of ATP-dependent interactions between DnaJ, DnaK and GrpE are required for fully efficient folding. This Chlamydia pneumoniae (Chlamydophila pneumoniae) protein is Protein GrpE.